The sequence spans 363 residues: tRNA dimethylallyltransferase (363 aa).

Residue 65-72 (GPTASGKS) coordinates ATP. Substrate is bound at residue 67-72 (TASGKS). 2 interaction with substrate tRNA regions span residues 90–93 (DSMQ) and 214–218 (QRLIR).

The protein belongs to the IPP transferase family. Monomer. Mg(2+) serves as cofactor.

It carries out the reaction adenosine(37) in tRNA + dimethylallyl diphosphate = N(6)-dimethylallyladenosine(37) in tRNA + diphosphate. In terms of biological role, catalyzes the transfer of a dimethylallyl group onto the adenine at position 37 in tRNAs that read codons beginning with uridine, leading to the formation of N6-(dimethylallyl)adenosine (i(6)A). The chain is tRNA dimethylallyltransferase from Rickettsia rickettsii (strain Sheila Smith).